The sequence spans 498 residues: Guanosine-5'-triphosphate,3'-diphosphate pyrophosphatase (498 aa).

The protein belongs to the GppA/Ppx family. GppA subfamily.

The enzyme catalyses guanosine 3'-diphosphate 5'-triphosphate + H2O = guanosine 3',5'-bis(diphosphate) + phosphate + H(+). It participates in purine metabolism; ppGpp biosynthesis; ppGpp from GTP: step 2/2. In terms of biological role, catalyzes the conversion of pppGpp to ppGpp. Guanosine pentaphosphate (pppGpp) is a cytoplasmic signaling molecule which together with ppGpp controls the 'stringent response', an adaptive process that allows bacteria to respond to amino acid starvation, resulting in the coordinated regulation of numerous cellular activities. In Pectobacterium carotovorum subsp. carotovorum (strain PC1), this protein is Guanosine-5'-triphosphate,3'-diphosphate pyrophosphatase.